A 177-amino-acid polypeptide reads, in one-letter code: Putative pre-16S rRNA nuclease (177 aa).

The protein belongs to the YqgF nuclease family.

It localises to the cytoplasm. In terms of biological role, could be a nuclease involved in processing of the 5'-end of pre-16S rRNA. The polypeptide is Putative pre-16S rRNA nuclease (Psychrobacter sp. (strain PRwf-1)).